A 189-amino-acid polypeptide reads, in one-letter code: GTPase HRas (189 aa).

Met1 is subject to N-acetylmethionine; in GTPase HRas; alternate. Residue Thr2 is modified to N-acetylthreonine; in GTPase HRas, N-terminally processed. GTP is bound by residues 13–18, 29–35, 59–60, 116–119, and 145–147; these read GVGKSA, VDEYDPT, AG, NKCD, and SAK. Residues 32–40 carry the Effector region motif; that stretch reads YDPTIEDSY. (Microbial infection) O-linked (Glc) threonine; by P.sordellii toxin TcsL glycosylation occurs at Thr35. An S-nitrosocysteine modification is found at Cys118. Positions 166–185 are hypervariable region; the sequence is HKLRKLNPPDESGPGCMSCK. A Glycyl lysine isopeptide (Lys-Gly) (interchain with G-Cter in ubiquitin) cross-link involves residue Lys170. Cys181 carries S-palmitoyl cysteine lipidation. The S-(15-deoxy-Delta12,14-prostaglandin J2-9-yl)cysteine; alternate moiety is linked to residue Cys184. Residue Cys184 is the site of S-palmitoyl cysteine; alternate attachment. Residue Cys186 is modified to Cysteine methyl ester. A lipid anchor (S-farnesyl cysteine) is attached at Cys186. Positions 187-189 are cleaved as a propeptide — removed in mature form; the sequence is VLS.

The protein belongs to the small GTPase superfamily. Ras family. In its GTP-bound form interacts with PLCE1. Interacts with TBC1D10C. Interacts with RGL3. Interacts with HSPD1. Found in a complex with at least BRAF, HRAS, MAP2K1, MAPK3 and RGS14. Interacts (active GTP-bound form) with RGS14 (via RBD 1 domain). Forms a signaling complex with RASGRP1 and DGKZ. Interacts with RASSF5. Interacts with PDE6D. Interacts with IKZF3. Interacts with RACK1. Interacts with PIK3CG; the interaction is required for membrane recruitment and beta-gamma G protein dimer-dependent activation of the PI3K gamma complex PIK3CG:PIK3R6. Interacts with RAPGEF2. Interacts (active GTP-bound form) with both SHOC2 and PP1c (all isoforms) to form a tertiary complex; SHOC2 and PP1c preferably bind M-Ras/MRAS, but they also bind K-Ras/KRAS, N-Ras/NRAS and H-Ras/HRAS. Interacts (GTP-bound form) with MAPKAP1/SIN1; inhibiting H-Ras/HRAS activity. Palmitoylated by the ZDHHC9-GOLGA7 complex. A continuous cycle of de- and re-palmitoylation regulates rapid exchange between plasma membrane and Golgi. In terms of processing, S-nitrosylated; critical for redox regulation. Important for stimulating guanine nucleotide exchange. No structural perturbation on nitrosylation. Post-translationally, the covalent modification of cysteine by 15-deoxy-Delta12,14-prostaglandin-J2 is autocatalytic and reversible. It may occur as an alternative to other cysteine modifications, such as S-nitrosylation and S-palmitoylation. Acetylation at Lys-104 prevents interaction with guanine nucleotide exchange factors (GEFs). In terms of processing, fatty-acylated at Lys-170. Post-translationally, ubiquitinated by the BCR(LZTR1) E3 ubiquitin ligase complex at Lys-170 in a non-degradative manner, leading to inhibit Ras signaling by decreasing Ras association with membranes. (Microbial infection) Glucosylated at Thr-35 by P.sordellii toxin TcsL. Monoglucosylation completely prevents the recognition of the downstream effector, blocking the GTPases in their inactive form, leading to inhibit Ras signaling. As to expression, widely expressed.

The protein localises to the cell membrane. It localises to the golgi apparatus. The protein resides in the golgi apparatus membrane. Its subcellular location is the nucleus. It is found in the cytoplasm. The protein localises to the perinuclear region. The catalysed reaction is GTP + H2O = GDP + phosphate + H(+). Its activity is regulated as follows. Alternates between an inactive form bound to GDP and an active form bound to GTP. Activated by a guanine nucleotide-exchange factor (GEF) and inactivated by a GTPase-activating protein (GAP). Functionally, involved in the activation of Ras protein signal transduction. Ras proteins bind GDP/GTP and possess intrinsic GTPase activity. This Homo sapiens (Human) protein is GTPase HRas (HRAS).